We begin with the raw amino-acid sequence, 321 residues long: tRNA(Ile)-lysidine synthase (321 aa).

20–25 (SGGADS) provides a ligand contact to ATP.

Belongs to the tRNA(Ile)-lysidine synthase family.

It is found in the cytoplasm. It carries out the reaction cytidine(34) in tRNA(Ile2) + L-lysine + ATP = lysidine(34) in tRNA(Ile2) + AMP + diphosphate + H(+). Ligates lysine onto the cytidine present at position 34 of the AUA codon-specific tRNA(Ile) that contains the anticodon CAU, in an ATP-dependent manner. Cytidine is converted to lysidine, thus changing the amino acid specificity of the tRNA from methionine to isoleucine. The polypeptide is tRNA(Ile)-lysidine synthase (Bordetella pertussis (strain Tohama I / ATCC BAA-589 / NCTC 13251)).